A 246-amino-acid polypeptide reads, in one-letter code: Pyridoxine 5'-phosphate synthase (246 aa).

3-amino-2-oxopropyl phosphate is bound at residue Asn9. 11–12 is a binding site for 1-deoxy-D-xylulose 5-phosphate; that stretch reads DH. Arg20 serves as a coordination point for 3-amino-2-oxopropyl phosphate. His45 acts as the Proton acceptor in catalysis. 1-deoxy-D-xylulose 5-phosphate contacts are provided by Arg47 and His52. The active-site Proton acceptor is the Glu72. 1-deoxy-D-xylulose 5-phosphate is bound at residue Thr102. Residue His193 is the Proton donor of the active site. Residues Gly194 and 215 to 216 contribute to the 3-amino-2-oxopropyl phosphate site; that span reads GH.

This sequence belongs to the PNP synthase family. As to quaternary structure, homooctamer; tetramer of dimers.

It is found in the cytoplasm. The enzyme catalyses 3-amino-2-oxopropyl phosphate + 1-deoxy-D-xylulose 5-phosphate = pyridoxine 5'-phosphate + phosphate + 2 H2O + H(+). It participates in cofactor biosynthesis; pyridoxine 5'-phosphate biosynthesis; pyridoxine 5'-phosphate from D-erythrose 4-phosphate: step 5/5. In terms of biological role, catalyzes the complicated ring closure reaction between the two acyclic compounds 1-deoxy-D-xylulose-5-phosphate (DXP) and 3-amino-2-oxopropyl phosphate (1-amino-acetone-3-phosphate or AAP) to form pyridoxine 5'-phosphate (PNP) and inorganic phosphate. The chain is Pyridoxine 5'-phosphate synthase from Colwellia psychrerythraea (strain 34H / ATCC BAA-681) (Vibrio psychroerythus).